A 139-amino-acid polypeptide reads, in one-letter code: UPF0225 protein Bpro_4182 (139 aa).

This sequence belongs to the UPF0225 family.

The protein is UPF0225 protein Bpro_4182 of Polaromonas sp. (strain JS666 / ATCC BAA-500).